Consider the following 313-residue polypeptide: Pyrimidine-specific ribonucleoside hydrolase RihB (313 aa).

The Proton acceptor role is filled by D11. D11, D16, and V124 together coordinate Ca(2+). Substrate is bound by residues Q227 and H239. Residue D240 coordinates Ca(2+).

This sequence belongs to the IUNH family. RihB subfamily. Homotetramer. Ca(2+) serves as cofactor.

It carries out the reaction a pyrimidine ribonucleoside + H2O = a pyrimidine nucleobase + D-ribose. Its function is as follows. Hydrolyzes cytidine or uridine to ribose and cytosine or uracil, respectively. Has a clear preference for cytidine over uridine. Strictly specific for ribonucleosides. The chain is Pyrimidine-specific ribonucleoside hydrolase RihB from Shigella sonnei (strain Ss046).